The primary structure comprises 117 residues: Immunoglobulin kappa variable 1-16 (117 aa).

The first 22 residues, 1 to 22 (MDMRVLAQLLGLLLLCFPGARC), serve as a signal peptide directing secretion. A framework-1 region spans residues 23–45 (DIQMTQSPSSLSASVGDRVTITC). Positions 24–117 (IQMTQSPSSL…YYCQQYNSYP (94 aa)) constitute an Ig-like domain. Cysteines 45 and 110 form a disulfide. Residues 46–56 (RASQGISNYLA) form a complementarity-determining-1 region. The interval 57 to 71 (WFQQKPGKAPKSLIY) is framework-2. The segment at 72–78 (AASSLQS) is complementarity-determining-2. Positions 79–110 (GVPSKFSGSGSGTDFTLTISSLQPEDFATYYC) are framework-3. Residues 111–117 (QQYNSYP) form a complementarity-determining-3 region.

In terms of assembly, immunoglobulins are composed of two identical heavy chains and two identical light chains; disulfide-linked.

The protein resides in the secreted. It is found in the cell membrane. V region of the variable domain of immunoglobulin light chains that participates in the antigen recognition. Immunoglobulins, also known as antibodies, are membrane-bound or secreted glycoproteins produced by B lymphocytes. In the recognition phase of humoral immunity, the membrane-bound immunoglobulins serve as receptors which, upon binding of a specific antigen, trigger the clonal expansion and differentiation of B lymphocytes into immunoglobulins-secreting plasma cells. Secreted immunoglobulins mediate the effector phase of humoral immunity, which results in the elimination of bound antigens. The antigen binding site is formed by the variable domain of one heavy chain, together with that of its associated light chain. Thus, each immunoglobulin has two antigen binding sites with remarkable affinity for a particular antigen. The variable domains are assembled by a process called V-(D)-J rearrangement and can then be subjected to somatic hypermutations which, after exposure to antigen and selection, allow affinity maturation for a particular antigen. This Homo sapiens (Human) protein is Immunoglobulin kappa variable 1-16.